A 189-amino-acid chain; its full sequence is Isopentenyl-diphosphate Delta-isomerase (189 aa).

Mn(2+) contacts are provided by H27 and H34. The 140-residue stretch at 32–171 (PLHFAFSTYI…PFVFSPWLVD (140 aa)) folds into the Nudix hydrolase domain. C69 is an active-site residue. C69 serves as a coordination point for Mg(2+). H71 lines the Mn(2+) pocket. A Mg(2+)-binding site is contributed by E89. Mn(2+) contacts are provided by E119 and E121. E121 is an active-site residue.

This sequence belongs to the IPP isomerase type 1 family. The cofactor is Mg(2+). Mn(2+) is required as a cofactor.

Its subcellular location is the cytoplasm. It catalyses the reaction isopentenyl diphosphate = dimethylallyl diphosphate. It functions in the pathway isoprenoid biosynthesis; dimethylallyl diphosphate biosynthesis; dimethylallyl diphosphate from isopentenyl diphosphate: step 1/1. In terms of biological role, catalyzes the 1,3-allylic rearrangement of the homoallylic substrate isopentenyl (IPP) to its highly electrophilic allylic isomer, dimethylallyl diphosphate (DMAPP). This chain is Isopentenyl-diphosphate Delta-isomerase, found in Corynebacterium glutamicum (strain ATCC 13032 / DSM 20300 / JCM 1318 / BCRC 11384 / CCUG 27702 / LMG 3730 / NBRC 12168 / NCIMB 10025 / NRRL B-2784 / 534).